We begin with the raw amino-acid sequence, 597 residues long: Probable methyltransferase-like protein 25 (597 aa).

Positions 245 to 254 (ECKGDAESVQ) are enriched in basic and acidic residues. 2 disordered regions span residues 245 to 265 (ECKG…DLSA) and 317 to 342 (TSSQ…KARD). Residues 317–326 (TSSQVQNTEK) show a composition bias toward polar residues.

Functionally, probable methyltransferase. The protein is Probable methyltransferase-like protein 25 (Mettl25) of Mus musculus (Mouse).